The sequence spans 421 residues: Imidazolonepropionase (421 aa).

Residues histidine 81 and histidine 83 each contribute to the Fe(3+) site. Zn(2+)-binding residues include histidine 81 and histidine 83. Arginine 90, tyrosine 153, and histidine 186 together coordinate 4-imidazolone-5-propanoate. Tyrosine 153 provides a ligand contact to N-formimidoyl-L-glutamate. Position 251 (histidine 251) interacts with Fe(3+). Histidine 251 lines the Zn(2+) pocket. Position 254 (glutamate 254) interacts with 4-imidazolone-5-propanoate. Position 326 (aspartate 326) interacts with Fe(3+). Aspartate 326 is a binding site for Zn(2+). N-formimidoyl-L-glutamate-binding residues include asparagine 328 and glycine 330. Residue serine 331 coordinates 4-imidazolone-5-propanoate.

This sequence belongs to the metallo-dependent hydrolases superfamily. HutI family. It depends on Zn(2+) as a cofactor. Fe(3+) is required as a cofactor.

The protein localises to the cytoplasm. The enzyme catalyses 4-imidazolone-5-propanoate + H2O = N-formimidoyl-L-glutamate. It functions in the pathway amino-acid degradation; L-histidine degradation into L-glutamate; N-formimidoyl-L-glutamate from L-histidine: step 3/3. Catalyzes the hydrolytic cleavage of the carbon-nitrogen bond in imidazolone-5-propanoate to yield N-formimidoyl-L-glutamate. It is the third step in the universal histidine degradation pathway. This Streptococcus sanguinis (strain SK36) protein is Imidazolonepropionase.